Consider the following 252-residue polypeptide: Indole-3-glycerol phosphate synthase (252 aa).

The protein belongs to the TrpC family.

It carries out the reaction 1-(2-carboxyphenylamino)-1-deoxy-D-ribulose 5-phosphate + H(+) = (1S,2R)-1-C-(indol-3-yl)glycerol 3-phosphate + CO2 + H2O. The protein operates within amino-acid biosynthesis; L-tryptophan biosynthesis; L-tryptophan from chorismate: step 4/5. This Listeria monocytogenes serotype 4a (strain HCC23) protein is Indole-3-glycerol phosphate synthase.